A 197-amino-acid chain; its full sequence is Imidazoleglycerol-phosphate dehydratase (197 aa).

The protein belongs to the imidazoleglycerol-phosphate dehydratase family.

The protein resides in the cytoplasm. The enzyme catalyses D-erythro-1-(imidazol-4-yl)glycerol 3-phosphate = 3-(imidazol-4-yl)-2-oxopropyl phosphate + H2O. The protein operates within amino-acid biosynthesis; L-histidine biosynthesis; L-histidine from 5-phospho-alpha-D-ribose 1-diphosphate: step 6/9. In Rhodopseudomonas palustris (strain BisB5), this protein is Imidazoleglycerol-phosphate dehydratase.